A 212-amino-acid polypeptide reads, in one-letter code: Hydroxyacylglutathione hydrolase GloC (212 aa).

Residues His55, His57, Asp59, His60, His132, Asp151, and His192 each coordinate Zn(2+).

It belongs to the metallo-beta-lactamase superfamily. Glyoxalase II family. It depends on Zn(2+) as a cofactor.

The enzyme catalyses an S-(2-hydroxyacyl)glutathione + H2O = a 2-hydroxy carboxylate + glutathione + H(+). It catalyses the reaction (R)-S-lactoylglutathione + H2O = (R)-lactate + glutathione + H(+). Its pathway is secondary metabolite metabolism; methylglyoxal degradation; (R)-lactate from methylglyoxal: step 2/2. Functionally, type II glyoxalase, isozyme of GloB, that hydrolyzes (R)-S-lactoylglutathione to (R)-lactate and glutathione. Plays a role in methylglyoxal (MG) detoxification. In Haemophilus influenzae (strain ATCC 51907 / DSM 11121 / KW20 / Rd), this protein is Hydroxyacylglutathione hydrolase GloC.